A 124-amino-acid chain; its full sequence is Small ribosomal subunit protein uS13 (124 aa).

Positions 99–124 (PCRGQKTKTNARTCKGPKKTVANKKK) are disordered. Residues 113–124 (KGPKKTVANKKK) show a composition bias toward basic residues.

Belongs to the universal ribosomal protein uS13 family. Part of the 30S ribosomal subunit. Forms a loose heterodimer with protein S19. Forms two bridges to the 50S subunit in the 70S ribosome.

In terms of biological role, located at the top of the head of the 30S subunit, it contacts several helices of the 16S rRNA. In the 70S ribosome it contacts the 23S rRNA (bridge B1a) and protein L5 of the 50S subunit (bridge B1b), connecting the 2 subunits; these bridges are implicated in subunit movement. Contacts the tRNAs in the A and P-sites. This is Small ribosomal subunit protein uS13 from Lachnospira eligens (strain ATCC 27750 / DSM 3376 / VPI C15-48 / C15-B4) (Eubacterium eligens).